A 130-amino-acid chain; its full sequence is Protein ApaG (130 aa).

The ApaG domain occupies 3–127; it reads RALTRDIEVT…FSLDSPGLMR (125 aa).

This Agrobacterium fabrum (strain C58 / ATCC 33970) (Agrobacterium tumefaciens (strain C58)) protein is Protein ApaG.